A 118-amino-acid polypeptide reads, in one-letter code: Small integral membrane protein 17 (118 aa).

A disordered region spans residues 1–84 (MQSLRPEQTR…DDESEGSQGF (84 aa)). A compositionally biased stretch (basic and acidic residues) spans 13 to 42 (LEPERTKTLLPRESRAWEKPPHPACTKDWE). A helical membrane pass occupies residues 96–116 (IVLVVCVLFLFLVLTGMPMMF).

Its subcellular location is the membrane. This chain is Small integral membrane protein 17 (SMIM17), found in Homo sapiens (Human).